The primary structure comprises 740 residues: Ribosome-releasing factor 2, mitochondrial (740 aa).

Residues 1 to 29 (MLKYAWQSGPKQSNRWLWHLSNQIWKRSY) constitute a mitochondrion transit peptide. In terms of domain architecture, tr-type G spans 31–310 (SKIRNIGILA…AVNAYLPAPE (280 aa)). Residues 40–47 (AHIDAGKT), 104–108 (DTPGH), and 158–161 (NKMD) contribute to the GTP site.

The protein belongs to the TRAFAC class translation factor GTPase superfamily. Classic translation factor GTPase family. EF-G/EF-2 subfamily.

Its subcellular location is the mitochondrion. Mitochondrial GTPase that mediates the disassembly of ribosomes from messenger RNA at the termination of mitochondrial protein biosynthesis. Not involved in the GTP-dependent ribosomal translocation step during translation elongation. The sequence is that of Ribosome-releasing factor 2, mitochondrial from Drosophila melanogaster (Fruit fly).